A 325-amino-acid polypeptide reads, in one-letter code: Protein TMED8 (325 aa).

Residues 1–78 (MSDLQAAEGP…MVSPVSKDAT (78 aa)) form a disordered region. A GOLD domain is found at 159-323 (PPCIWTFAKV…NKTLYFHIYY (165 aa)). Lys169 carries the post-translational modification N6-acetyllysine. Residues 232–267 (TVQVSDSSDDEDEEEEEEEEIEEPVPAGDVERGSRS) are disordered. Residues 238 to 254 (SSDDEDEEEEEEEEIEE) show a composition bias toward acidic residues.

This chain is Protein TMED8 (TMED8), found in Homo sapiens (Human).